Reading from the N-terminus, the 338-residue chain is Formamidase (338 aa).

Residues 15–257 (VVIGLAQLAL…DEIVCCELRP (243 aa)) enclose the CN hydrolase domain. Glu61 (proton acceptor) is an active-site residue. Lys130 acts as the Proton donor in catalysis. Residue Cys163 is the Nucleophile of the active site.

This sequence belongs to the carbon-nitrogen hydrolase superfamily. Aliphatic amidase family.

The enzyme catalyses formamide + H2O = formate + NH4(+). Functionally, is an aliphatic amidase with a restricted substrate specificity, as it only hydrolyzes formamide. In Pseudomonas syringae pv. syringae (strain B728a), this protein is Formamidase.